Reading from the N-terminus, the 160-residue chain is Putative transcriptional regulator protein YobU (160 aa).

This is Putative transcriptional regulator protein YobU (yobU) from Bacillus subtilis (strain 168).